The following is a 141-amino-acid chain: Large ribosomal subunit protein bL17 (141 aa).

This sequence belongs to the bacterial ribosomal protein bL17 family. In terms of assembly, part of the 50S ribosomal subunit. Contacts protein L32.

This Bartonella bacilliformis (strain ATCC 35685 / KC583 / Herrer 020/F12,63) protein is Large ribosomal subunit protein bL17.